Reading from the N-terminus, the 376-residue chain is MDKISAPFFSGTSPAAASVAGVDEDDRLCFQAQELMFAYNISMVLRAAIQLGLLDALSAAGGKALTPNELVENVETSSNKAEAAAAVDRILRYLSCFNVVTCSSEAAGPDGTLVRRYTTGPLCRWLTKDRGDGTLSPFAVFVVDPDHLFPWHHIAEAVTAGGPSAFERTQKWPYYEYMGKNQRLGTLFDNAMAQHSVILVTKMLERFKGFDGVQRLVDVGGGTGSTLGMITSKYKHMTGINYDLPHVIAQGLPLPGVEHVAGDMYESIPTGDAVLLQWITLMLNDDEFVKILSNCHNALPKDGKVIVVDGILPENPDSSLTARDAFTLDIIMFVLFKGAKQRTEKEFARLAKQAGFTGGIKKTYIFFNFYALEFTK.

Residues G220, D243, D263, and M264 each coordinate S-adenosyl-L-homocysteine.

The protein belongs to the class I-like SAM-binding methyltransferase superfamily. Cation-independent O-methyltransferase family. More present in the fifth leaf than in the second leaf (at protein level).

The catalysed reaction is 3-(aminomethyl)indole + 2 S-adenosyl-L-methionine = gramine + 2 S-adenosyl-L-homocysteine + 2 H(+). The protein operates within alkaloid biosynthesis. Repressed by sodium carbonate, sodium bicarbonate and K-phosphate. In terms of biological role, methylates 3-aminomethylindole (AMI) and N-methyl-3-aminomethylindole (MAMI), two substrates involved in gramine biosynthesis, a toxic indole alkaloid. Can use S-adenosyl-L-methionine (AdoMet) as a methyl donor. Unable to mediate caffeic acid O-methylation. The protein is 3-aminomethylindole N-methyltransferase of Hordeum vulgare subsp. vulgare (Domesticated barley).